The following is a 279-amino-acid chain: Toxin TxP-I (279 aa).

Positions Met1 to Ala14 are cleaved as a signal peptide. Residues Val15 to Ile27 constitute a propeptide that is removed on maturation.

Post-translationally, contains several disulfide bonds. As to expression, posterior glands which appear to be connected with the stylet through a series of ducts.

The protein localises to the secreted. Functionally, part of a complex mixture of neurotoxins which P.tritici utilizes to capture prey. It has contracting-paralyzing activity in insects. The polypeptide is Toxin TxP-I (Pyemotes tritici (Straw itch mite)).